The following is a 257-amino-acid chain: DNA repair protein RecO (257 aa).

It belongs to the RecO family.

In terms of biological role, involved in DNA repair and RecF pathway recombination. This Streptococcus thermophilus (strain ATCC BAA-491 / LMD-9) protein is DNA repair protein RecO.